Reading from the N-terminus, the 317-residue chain is Protoheme IX farnesyltransferase (317 aa).

A run of 9 helical transmembrane segments spans residues 36-56 (VMVLVIFTALVGMVVSDATVN), 57-77 (PVIAAISLLMIAVGAGASGCL), 108-128 (LAFGIVLSVGSVLILGLASNW), 129-149 (LAAGLLAFTIVFYAVIYSMWL), 157-177 (IVIGGAAGALPPVVGQAAVTG), 184-204 (LVLFAIIFIWTPPHFWALALV), 230-247 (IVWYSLLLAPLALVPVWL), 251-273 (GWLYAVVGVLGGLGMLAGAVQVY), and 284-304 (AAMGLFAFSILYLFLLFSALL).

Belongs to the UbiA prenyltransferase family. Protoheme IX farnesyltransferase subfamily.

The protein resides in the cell inner membrane. The catalysed reaction is heme b + (2E,6E)-farnesyl diphosphate + H2O = Fe(II)-heme o + diphosphate. It participates in porphyrin-containing compound metabolism; heme O biosynthesis; heme O from protoheme: step 1/1. In terms of biological role, converts heme B (protoheme IX) to heme O by substitution of the vinyl group on carbon 2 of heme B porphyrin ring with a hydroxyethyl farnesyl side group. The chain is Protoheme IX farnesyltransferase from Methylorubrum populi (strain ATCC BAA-705 / NCIMB 13946 / BJ001) (Methylobacterium populi).